Here is a 252-residue protein sequence, read N- to C-terminus: 5'-nucleotidase SurE (252 aa).

The a divalent metal cation site is built by Asp8, Asp9, Ser40, and Asn93.

Belongs to the SurE nucleotidase family. A divalent metal cation is required as a cofactor.

Its subcellular location is the cytoplasm. It catalyses the reaction a ribonucleoside 5'-phosphate + H2O = a ribonucleoside + phosphate. In terms of biological role, nucleotidase that shows phosphatase activity on nucleoside 5'-monophosphates. The chain is 5'-nucleotidase SurE from Erythrobacter litoralis (strain HTCC2594).